The primary structure comprises 397 residues: Ubiquitin-like modifier-activating enzyme 5 (397 aa).

ATP is bound by residues G76, D97, K120, N143, and N177. The Zn(2+) site is built by C219 and C222. C243 serves as the catalytic Glycyl thioester intermediate. Positions 296 and 301 each coordinate Zn(2+). The disordered stretch occupies residues 343–384; the sequence is PSDAPTDLSQSTDVGQGLRLAYEAPEKSSAEATQAATAPVDD.

The protein belongs to the ubiquitin-activating E1 family. UBA5 subfamily.

Its function is as follows. E1-like enzyme which activates UFM1. This Drosophila pseudoobscura pseudoobscura (Fruit fly) protein is Ubiquitin-like modifier-activating enzyme 5.